The primary structure comprises 306 residues: Palmitoyl-protein thioesterase ABHD10, mitochondrial (306 aa).

The transit peptide at 1–52 (MAGVGLAAVPAWVPCRRWGLAAVTFGFHHGLSTLLARKTERAPQWLRACRHK) directs the protein to the mitochondrion. Residues 78-177 (IIFIPGYISN…KVVALVGVAT (100 aa)) form the AB hydrolase-1 domain. Residues serine 152, aspartate 249, and histidine 279 each act as charge relay system in the active site.

Belongs to the AB hydrolase superfamily.

It localises to the mitochondrion. It carries out the reaction S-hexadecanoyl-L-cysteinyl-[protein] + H2O = L-cysteinyl-[protein] + hexadecanoate + H(+). The catalysed reaction is mycophenolic acid O-acyl-beta-D-glucuronide + H2O = mycophenolate + D-glucuronate + H(+). Its activity is regulated as follows. Inhibited by palmostatin-B. Its function is as follows. Acts as an acyl-protein thioesterase that hydrolyzes fatty acids from acylated residues in proteins. Regulates the mitochondrial S-depalmitoylation of the nucleophilic active site residue of peroxiredoxin-5/PRDX5, a key antioxidant protein, therefore modulating mitochondrial antioxidant ability. Also catalyzes the deglucuronidation of mycophenolic acid acyl-glucuronide, an active metabolite of the immunosuppressant drug mycophenolate. The protein is Palmitoyl-protein thioesterase ABHD10, mitochondrial (ABHD10) of Bos taurus (Bovine).